The sequence spans 427 residues: Light-independent protochlorophyllide reductase subunit N (427 aa).

[4Fe-4S] cluster contacts are provided by cysteine 30, cysteine 55, and cysteine 116.

It belongs to the BchN/ChlN family. As to quaternary structure, protochlorophyllide reductase is composed of three subunits; BchL, BchN and BchB. Forms a heterotetramer of two BchB and two BchN subunits. The cofactor is [4Fe-4S] cluster.

The catalysed reaction is chlorophyllide a + oxidized 2[4Fe-4S]-[ferredoxin] + 2 ADP + 2 phosphate = protochlorophyllide a + reduced 2[4Fe-4S]-[ferredoxin] + 2 ATP + 2 H2O. Its pathway is porphyrin-containing compound metabolism; bacteriochlorophyll biosynthesis (light-independent). Functionally, component of the dark-operative protochlorophyllide reductase (DPOR) that uses Mg-ATP and reduced ferredoxin to reduce ring D of protochlorophyllide (Pchlide) to form chlorophyllide a (Chlide). This reaction is light-independent. The NB-protein (BchN-BchB) is the catalytic component of the complex. This is Light-independent protochlorophyllide reductase subunit N from Rhodopseudomonas palustris (strain BisA53).